The sequence spans 109 residues: Cell division suppressor protein YneA (109 aa).

The region spanning 39-90 (SEVDVNEGDSIWALADQYAAKSDMAKADFVSWVEKENNLTDGHVKAGDYVVI) is the LysM domain.

Belongs to the YneA family.

It is found in the cytoplasm. Functionally, inhibits cell division during the SOS response. Affects a later stage of the cell division protein assembly, after the assembly of the Z ring, by probably suppressing recruitment of FtsL and/or DivIC to the division machinery. The polypeptide is Cell division suppressor protein YneA (Listeria innocua serovar 6a (strain ATCC BAA-680 / CLIP 11262)).